Reading from the N-terminus, the 697-residue chain is Heat shock protein homolog SSE1 (697 aa).

A compositionally biased stretch (low complexity) spans 664 to 674 (EMAEKLAAQRA). The tract at residues 664-697 (EMAEKLAAQRAAEQKAQESKAESDKDAEGDIDLD) is disordered. Basic and acidic residues predominate over residues 675-691 (AEQKAQESKAESDKDAE).

This sequence belongs to the heat shock protein 70 family.

It localises to the cytoplasm. This chain is Heat shock protein homolog SSE1 (SSE1), found in Eremothecium gossypii (strain ATCC 10895 / CBS 109.51 / FGSC 9923 / NRRL Y-1056) (Yeast).